The chain runs to 508 residues: Lysine--tRNA ligase (508 aa).

Mg(2+) contacts are provided by glutamate 418 and glutamate 425.

Belongs to the class-II aminoacyl-tRNA synthetase family. As to quaternary structure, homodimer. Requires Mg(2+) as cofactor.

The protein localises to the cytoplasm. The catalysed reaction is tRNA(Lys) + L-lysine + ATP = L-lysyl-tRNA(Lys) + AMP + diphosphate. This Burkholderia vietnamiensis (strain G4 / LMG 22486) (Burkholderia cepacia (strain R1808)) protein is Lysine--tRNA ligase.